A 312-amino-acid polypeptide reads, in one-letter code: Short-chain dehydrogenase/reductase pkfC (312 aa).

NADP(+)-binding residues include Lys-56, Asn-108, and Lys-140. Ser-164 serves as the catalytic Proton donor. The NADP(+) site is built by Tyr-193 and Lys-197. The active-site Proton acceptor is the Tyr-193. Catalysis depends on Lys-197, which acts as the Lowers pKa of active site Tyr.

It belongs to the short-chain dehydrogenases/reductases (SDR) family.

The protein operates within secondary metabolite biosynthesis. Its function is as follows. Short-chain dehydrogenase/reductase; part of the gene cluster that mediates the biosynthesis of aspernidine A, a prenylated isoindolinone. The starting point of the biosynthesis of aspernidin A is the production of orsellinaldehyde by the non-reducing polyketide synthase pkfA. Hydroxylation, methylation of one of the phenol groups, and prenylation, presumably catalyzed by the prenyltransferase pkfE, would be needed to yield aspernidine D. Subsequently, the cytochrome P450 monooxygenase pkfB is responsible for hydroxylation of aspernidine D to yield aspernidine E. The dehydrogenase pkfF may be responsible for further oxidation of aspernidine E to form a dialdehyde intermediate which is further transformed in a series of steps, some of which are enzyme-mediated, to generate aspernidine A. The possibility that additional enzymes outside of the cluster are involved in aspernidine A biosynthesis cannot be excluded. In Emericella nidulans (strain FGSC A4 / ATCC 38163 / CBS 112.46 / NRRL 194 / M139) (Aspergillus nidulans), this protein is Short-chain dehydrogenase/reductase pkfC.